Consider the following 368-residue polypeptide: HECT-type ubiquitin ligase-interacting protein apyA (368 aa).

This sequence belongs to the arrestin family. Interacts with hulA.

Functionally, may be involved in signaling by recognizing appropriately phosphorylated substrates via its arrestin domains and then recruit a HECT-type ubiquitin ligase such as hulA, leading to ubiquitination of the substrate, providing a link between ubiquitination and phosphorylation in protein regulation and stability. The sequence is that of HECT-type ubiquitin ligase-interacting protein apyA (apyA) from Emericella nidulans (strain FGSC A4 / ATCC 38163 / CBS 112.46 / NRRL 194 / M139) (Aspergillus nidulans).